The primary structure comprises 1822 residues: MAGPRPSPWARLLLAALISVSLSGTLANRCKKAPVKSCTECVRVDKDCAYCTDEMFRDRRCNTQAELLAAGCQRESIVVMESSFQITEETQIDTTLRRSQMSPQGLRVRLRPGEERHFELEVFEPLESPVDLYILMDFSNSMSDDLDNLKKMGQNLARVLSQLTSDYTIGFGKFVDKVSVPQTDMRPEKLKEPWPNSDPPFSFKNVISLTEDVDEFRNKLQGERISGNLDAPEGGFDAILQTAVCTRDIGWRPDSTHLLVFSTESAFHYEADGANVLAGIMSRNDERCHLDTTGTYTQYRTQDYPSVPTLVRLLAKHNIIPIFAVTNYSYSYYEKLHTYFPVSSLGVLQEDSSNIVELLEEAFNRIRSNLDIRALDSPRGLRTEVTSKMFQKTRTGSFHIRRGEVGIYQVQLRALEHVDGTHVCQLPEDQKGNIHLKPSFSDGLKMDAGIICDVCTCELQKEVRSARCSFNGDFVCGQCVCSEGWSGQTCNCSTGSLSDIQPCLREGEDKPCSGRGECQCGHCVCYGEGRYEGQFCEYDNFQCPRTSGFLCNDRGRCSMGQCVCEPGWTGPSCDCPLSNATCIDSNGGICNGRGHCECGRCHCHQQSLYTDTICEINYSAIHPGLCEDLRSCVQCQAWGTGEKKGRTCEECNFKVKMVDELKRAEEVVVRCSFRDEDDDCTYSYTMEGDGAPGPNSTVLVHKKKDCPPGSFWWLIPLLLLLLPLLALLLLLCWKYCACCKACLALLPCCNRGHMVGFKEDHYMLRENLMASDHLDTPMLRSGNLKGRDVVRWKVTNNMQRPGFATHAASINPTELVPYGLSLRLARLCTENLLKPDTRECAQLRQEVEENLNEVYRQISGVHKLQQTKFRQQPNAGKKQDHTIVDTVLMAPRSAKPALLKLTEKQVEQRAFHDLKVAPGYYTLTADQDARGMVEFQEGVELVDVRVPLFIRPEDDDEKQLLVEAIDVPAGTATLGRRLVNITIIKEQARDVVSFEQPEFSVSRGDQVARIPVIRRVLDGGKSQVSYRTQDGTAQGNRDYIPVEGELLFQPGEAWKELQVKLLELQEVDSLLRGRQVRRFHVQLSNPKFGAHLGQPHSTTIIIRDPDELDRSFTSQMLSSQPPPHGDLGAPQNPNAKAAGSRKIHFNWLPPSGKPMGYRVKYWIQGDSESEAHLLDSKVPSVELTNLYPYCDYEMKVCAYGAQGEGPYSSLVSCRTHQEVPSEPGRLAFNVVSSTVTQLSWAEPAETNGEITAYEVCYGLVNDDNRPIGPMKKVLVDNPKNRMLLIENLRESQPYRYTVKARNGAGWGPEREAIINLATQPKRPMSIPIIPDIPIVDAQSGEDYDSFLMYSDDVLRSPSGSQRPSVSDDTGCGWKFEPLLGEELDLRRVTWRLPPELIPRLSASSGRSSDAEAPHGPPDDGGAGGKGGSLPRSATPGPPGEHLVNGRMDFAFPGSTNSLHRMTTTSAAAYGTHLSPHVPHRVLSTSSTLTRDYNSLTRSEHSHSTTLPRDYSTLTSVSSHDSRLTAGVPDTPTRLVFSALGPTSLRVSWQEPRCERPLQGYSVEYQLLNGGELHRLNIPNPAQTSVVVEDLLPNHSYVFRVRAQSQEGWGREREGVITIESQVHPQSPLCPLPGSAFTLSTPSAPGPLVFTALSPDSLQLSWERPRRPNGDIVGYLVTCEMAQGGGPATAFRVDGDSPESRLTVPGLSENVPYKFKVQARTTEGFGPEREGIITIESQDGGPFPQLGSRAGLFQHPLQSEYSSITTTHTSATEPFLVDGLTLGAQHLEAGGSLTRHVTQEFVSRTLTTSGTLSTHMDQQFFQT.

Residues 1-27 (MAGPRPSPWARLLLAALISVSLSGTLA) form the signal peptide. Residues 28-710 (NRCKKAPVKS…HKKKDCPPGS (683 aa)) lie on the Extracellular side of the membrane. Positions 29–73 (RCKKAPVKSCTECVRVDKDCAYCTDEMFRDRRCNTQAELLAAGCQ) constitute a PSI domain. 8 disulfides stabilise this stretch: cysteine 30–cysteine 48, cysteine 38–cysteine 455, cysteine 41–cysteine 61, cysteine 51–cysteine 72, cysteine 245–cysteine 288, cysteine 457–cysteine 476, cysteine 468–cysteine 479, and cysteine 481–cysteine 490. The VWFA domain maps to 131–329 (DLYILMDFSN…IPIFAVTNYS (199 aa)). Serine 139 and serine 141 together coordinate Mg(2+). Ca(2+)-binding residues include serine 141, aspartate 144, aspartate 145, and aspartate 176. Positions 194-199 (WPNSDP) are involved in NRG1- and IGF1-binding. 4 residues coordinate Ca(2+): asparagine 228, aspartate 230, proline 232, and glutamate 233. Glutamate 233 contacts Mg(2+). N-linked (GlcNAc...) asparagine glycosylation is present at asparagine 327. Residue glutamate 350 participates in Ca(2+) binding. I-EGF domains lie at 457–491 (CELQ…QTCN), 492–537 (CSTG…QFCE), 538–574 (YDNF…PSCD), and 575–615 (CPLS…TICE). Asparagine 491 carries an N-linked (GlcNAc...) asparagine glycan. 11 cysteine pairs are disulfide-bonded: cysteine 492/cysteine 520, cysteine 503/cysteine 518, cysteine 512/cysteine 523, cysteine 525/cysteine 536, cysteine 543/cysteine 557, cysteine 551/cysteine 562, cysteine 564/cysteine 573, cysteine 575/cysteine 598, cysteine 582/cysteine 596, cysteine 590/cysteine 601, and cysteine 603/cysteine 614. Asparagine 579 carries an N-linked (GlcNAc...) asparagine glycan. The N-linked (GlcNAc...) asparagine glycan is linked to asparagine 617. Intrachain disulfides connect cysteine 626-cysteine 671, cysteine 632-cysteine 651, cysteine 635-cysteine 648, and cysteine 680-cysteine 706. The N-linked (GlcNAc...) asparagine glycan is linked to asparagine 695. Residues 711–733 (FWWLIPLLLLLLPLLALLLLLCW) form a helical membrane-spanning segment. Residues 732–749 (CWKYCACCKACLALLPCC) are palmitoylated on several cysteines. At 734–1822 (KYCACCKACL…THMDQQFFQT (1089 aa)) the chain is on the cytoplasmic side. A phosphoserine mark is found at serine 771, serine 1069, and serine 1119. One can recognise a Calx-beta domain in the interval 979 to 1084 (VNITIIKEQA…QVRRFHVQLS (106 aa)). The disordered stretch occupies residues 1113 to 1140 (TSQMLSSQPPPHGDLGAPQNPNAKAAGS). Fibronectin type-III domains follow at residues 1129–1218 (APQN…THQE) and 1222–1321 (EPGR…TQPK). Residues 1400–1444 (LSASSGRSSDAEAPHGPPDDGGAGGKGGSLPRSATPGPPGEHLVN) form a disordered region. Over residues 1418-1427 (DDGGAGGKGG) the composition is skewed to gly residues. 3 positions are modified to phosphoserine: serine 1454, serine 1457, and serine 1474. Phosphothreonine is present on threonine 1487. Serine 1494 bears the Phosphoserine mark. Residues 1495–1525 (LTRSEHSHSTTLPRDYSTLTSVSSHDSRLTA) form a disordered region. The span at 1503-1518 (STTLPRDYSTLTSVSS) shows a compositional bias: polar residues. The residue at position 1530 (threonine 1530) is a Phosphothreonine. 2 consecutive Fibronectin type-III domains span residues 1530–1625 (TPTR…VHPQ) and 1643–1739 (APGP…SQDG). Serine 1791 carries the post-translational modification Phosphoserine.

This sequence belongs to the integrin beta chain family. As to quaternary structure, heterodimer of an alpha and a beta subunit. Beta-4 associates with alpha-6. Interacts (via cytoplasmic region) with COL17A1 (via cytoplasmic region). Interacts (via cytoplasmic region) with DST isoform 3 (via N-terminus). Isoform beta-4a interacts (via cytoplasmic domain) with DST (via N-terminus). Interacts with RAC1. ITGA6:ITGB4 is found in a ternary complex with NRG1 and ERBB3. ITGA6:ITGB4 is found in a ternary complex with IGF1 and IGF1R. ITGA6:ITGB4 interacts with IGF2. Interacts with TMEM268; this interaction prevents ITGB4 degradation. Palmitoylated by DHHC3 at several cysteines of the membrane-proximal region, enhancing stability and cell surface expression. Palmitoylation also promotes secondary association with tertaspanins. As to expression, integrin alpha-6/beta-4 is predominantly expressed by epithelia. Isoform beta-4D is also expressed in colon and placenta. Isoform beta-4E is also expressed in epidermis, lung, duodenum, heart, spleen and stomach.

Its subcellular location is the cell membrane. The protein resides in the cell junction. It is found in the hemidesmosome. In terms of biological role, integrin alpha-6/beta-4 is a receptor for laminin. Plays a critical structural role in the hemidesmosome of epithelial cells. Is required for the regulation of keratinocyte polarity and motility. ITGA6:ITGB4 binds to NRG1 (via EGF domain) and this binding is essential for NRG1-ERBB signaling. ITGA6:ITGB4 binds to IGF1 and this binding is essential for IGF1 signaling. ITGA6:ITGB4 binds to IGF2 and this binding is essential for IGF2 signaling. The sequence is that of Integrin beta-4 (ITGB4) from Homo sapiens (Human).